The primary structure comprises 341 residues: Dimethylsulfoniopropionate lyase 7 (341 aa).

2 stretches are compositionally biased toward basic and acidic residues: residues 1–10 and 319–328; these read MAGKDRKTIE and ERKLAKDRQK. Disordered stretches follow at residues 1–24 and 319–341; these read MAGK…GGRF and ERKL…AFDA.

It belongs to the aspartate/glutamate racemases family. ALMA1 subfamily. As to quaternary structure, homotetramer.

It carries out the reaction S,S-dimethyl-beta-propiothetin = acrylate + dimethyl sulfide + H(+). In terms of biological role, mediates cleavage of dimethylsulfoniopropionate (DMSP) into dimethyl sulfide (DMS) and acrylate. DMS is the principal form by which sulfur is transported from oceans to the atmosphere and is a key component of the ocean sulfur cycle. The chain is Dimethylsulfoniopropionate lyase 7 from Emiliania huxleyi (strain CCMP1516).